The chain runs to 1115 residues: Gamma tubulin complex adapter mto1 (1115 aa).

Positions 25–180 (LTDEEVRRIL…NYISSSLDQL (156 aa)) are disordered. 2 stretches are compositionally biased toward basic and acidic residues: residues 28–41 (EEVRRILSPRKEGS) and 56–71 (EASHKYDFEIDRDSLK). 3 stretches are compositionally biased toward polar residues: residues 72 to 102 (SDSGSPRLHQNATAPTSSTPLQSPDESVNKL), 119 to 130 (DTTNFDRLNDNI), and 139 to 151 (PVLTANQGFQSQE). Serine 94 bears the Phosphoserine mark. The span at 165 to 176 (SDPSSPNYISSS) shows a compositional bias: low complexity. Residues 445–915 (NEALLLRKQE…ERNSLIKNIV (471 aa)) adopt a coiled-coil conformation. Residues 523 to 537 (LMRMEQQWREDVDQL) are required for interaction with mto2. Residues 1001 to 1011 (GSTSSIPNSPR) show a composition bias toward polar residues. Disordered stretches follow at residues 1001 to 1037 (GSTSSIPNSPRASKRVSLDSEDKKLVPASPDKSAVQR) and 1067 to 1115 (EQEG…QEHK). A phosphoserine mark is found at serine 1005 and serine 1009. Basic and acidic residues-rich tracts occupy residues 1016–1025 (VSLDSEDKKL) and 1067–1084 (EQEGRKRDKLGARERLQD). A coiled-coil region spans residues 1072 to 1102 (KRDKLGARERLQDLIRQNRSLSRQIKTDKES). Polar residues-rich tracts occupy residues 1086–1095 (IRQNRSLSRQ) and 1104–1115 (SRSPSISSQEHK).

In terms of assembly, interacts with mto2; the interaction is direct and required for efficient binding to the gamma-tubulin complex. Interacts with gamma tubulin complex subunits alp4, alp6 and gtb1. Interacts with mcp6.

It localises to the cytoplasm. The protein localises to the cytoskeleton. It is found in the microtubule organizing center. Its subcellular location is the spindle pole body. Spindle pole body (SPB) component that acts as the gamma-tubulin complex-binding protein of the SPB outer plaque. Promotes nucleation of all cytoplasmic microtubules by recruiting the gamma-tubulin complex to the spindle pole body (SPB), to the interphase microtubule organizing center (iMTOC), and to the equatorial MTOC (eMTOC) during anaphase. This is Gamma tubulin complex adapter mto1 from Schizosaccharomyces pombe (strain 972 / ATCC 24843) (Fission yeast).